A 276-amino-acid polypeptide reads, in one-letter code: 2-dehydro-3-deoxyphosphooctonate aldolase (276 aa).

This sequence belongs to the KdsA family.

The protein localises to the cytoplasm. The catalysed reaction is D-arabinose 5-phosphate + phosphoenolpyruvate + H2O = 3-deoxy-alpha-D-manno-2-octulosonate-8-phosphate + phosphate. It participates in carbohydrate biosynthesis; 3-deoxy-D-manno-octulosonate biosynthesis; 3-deoxy-D-manno-octulosonate from D-ribulose 5-phosphate: step 2/3. Its pathway is bacterial outer membrane biogenesis; lipopolysaccharide biosynthesis. The protein is 2-dehydro-3-deoxyphosphooctonate aldolase of Xylella fastidiosa (strain M23).